Reading from the N-terminus, the 215-residue chain is MCRINFTTLSLILVLWSGSLMSEPSQNADGSIKGLYEYLLQREYAAPVSYADHQIKRKAVRSPSLRLRFGRRSDPSVPVEPEDDDMVDQRSIRAPQLRLRFGRTDPLWSSFNENALLEEKRAPSQRLRWGRSGGGMFSTNDVMQQKAIRAPQLRLRFGRSDPSWAMFNEHQLDEQQFADATRQPSKTLRGDEPTSIESTEQVESEENSPSNMDEK.

Positions 1–22 (MCRINFTTLSLILVLWSGSLMS) are cleaved as a signal peptide. A propeptide spanning residues 23 to 56 (EPSQNADGSIKGLYEYLLQREYAAPVSYADHQIK) is cleaved from the precursor. A phenylalanine amide mark is found at F69 and F101. W129 bears the Tryptophan amide mark. At F157 the chain carries Phenylalanine amide. A propeptide spanning residues 160 to 215 (SDPSWAMFNEHQLDEQQFADATRQPSKTLRGDEPTSIESTEQVESEENSPSNMDEK) is cleaved from the precursor. The interval 173–215 (DEQQFADATRQPSKTLRGDEPTSIESTEQVESEENSPSNMDEK) is disordered.

The protein belongs to the NPY family.

Its subcellular location is the secreted. Functionally, plays a role in controlling food intake and regulating body size. In Aedes aegypti (Yellowfever mosquito), this protein is Short neuropeptide F.